We begin with the raw amino-acid sequence, 139 residues long: S-adenosylmethionine decarboxylase proenzyme (139 aa).

The active-site Schiff-base intermediate with substrate; via pyruvic acid is the serine 63. Serine 63 carries the post-translational modification Pyruvic acid (Ser); by autocatalysis. Histidine 68 functions as the Proton acceptor; for processing activity in the catalytic mechanism. Catalysis depends on cysteine 83, which acts as the Proton donor; for catalytic activity.

The protein belongs to the prokaryotic AdoMetDC family. Type 1 subfamily. In terms of assembly, heterotetramer of two alpha and two beta chains arranged as a dimer of alpha/beta heterodimers. The cofactor is pyruvate. Post-translationally, is synthesized initially as an inactive proenzyme. Formation of the active enzyme involves a self-maturation process in which the active site pyruvoyl group is generated from an internal serine residue via an autocatalytic post-translational modification. Two non-identical subunits are generated from the proenzyme in this reaction, and the pyruvate is formed at the N-terminus of the alpha chain, which is derived from the carboxyl end of the proenzyme. The post-translation cleavage follows an unusual pathway, termed non-hydrolytic serinolysis, in which the side chain hydroxyl group of the serine supplies its oxygen atom to form the C-terminus of the beta chain, while the remainder of the serine residue undergoes an oxidative deamination to produce ammonia and the pyruvoyl group blocking the N-terminus of the alpha chain.

The catalysed reaction is S-adenosyl-L-methionine + H(+) = S-adenosyl 3-(methylsulfanyl)propylamine + CO2. It participates in amine and polyamine biosynthesis; S-adenosylmethioninamine biosynthesis; S-adenosylmethioninamine from S-adenosyl-L-methionine: step 1/1. Catalyzes the decarboxylation of S-adenosylmethionine to S-adenosylmethioninamine (dcAdoMet), the propylamine donor required for the synthesis of the polyamines spermine and spermidine from the diamine putrescine. This is S-adenosylmethionine decarboxylase proenzyme from Pyrococcus abyssi (strain GE5 / Orsay).